Reading from the N-terminus, the 538-residue chain is Succinyl-CoA:acetate CoA-transferase (538 aa).

Position 305–309 (305–309 (GVGSV)) interacts with CoA. E330 acts as the 5-glutamyl coenzyme A thioester intermediate in catalysis. N420 and G424 together coordinate CoA.

Belongs to the acetyl-CoA hydrolase/transferase family.

It catalyses the reaction succinyl-CoA + acetate = succinate + acetyl-CoA. Forms succinyl-CoA from succinate and acetyl-CoA. In Clostridium kluyveri (strain ATCC 8527 / DSM 555 / NBRC 12016 / NCIMB 10680 / K1), this protein is Succinyl-CoA:acetate CoA-transferase.